Here is a 329-residue protein sequence, read N- to C-terminus: Transcription factor TGA2.3 (329 aa).

Residues 1-48 (MADMSPRTDTSTDDTDDNHMLEPGQLALAAASDSDRSKDKHEDQKTLR) are disordered. The span at 33 to 46 (DSDRSKDKHEDQKT) shows a compositional bias: basic and acidic residues. The bZIP domain maps to 43–87 (DQKTLRRLAQNREAARKSRLRKKAYVQQLENSRLKLTQLEQELQR). Positions 45–65 (KTLRRLAQNREAARKSRLRKK) are basic motif. The leucine-zipper stretch occupies residues 71–85 (LENSRLKLTQLEQEL). The DOG1 domain occupies 110-326 (ALAFDMEYAR…RALSSLWLAR (217 aa)).

Belongs to the bZIP family. Interacts with NPR1/NH1 and NPR3/NH3.

The protein localises to the nucleus. In terms of biological role, transcriptional regulator involved in defense response. The chain is Transcription factor TGA2.3 from Oryza sativa subsp. japonica (Rice).